The chain runs to 440 residues: Xaa-Pro dipeptidase (440 aa).

Mn(2+)-binding residues include aspartate 244, aspartate 255, histidine 335, glutamate 380, and glutamate 419.

It belongs to the peptidase M24B family. Bacterial-type prolidase subfamily. It depends on Mn(2+) as a cofactor.

The enzyme catalyses Xaa-L-Pro dipeptide + H2O = an L-alpha-amino acid + L-proline. Its function is as follows. Splits dipeptides with a prolyl residue in the C-terminal position. The polypeptide is Xaa-Pro dipeptidase (Shewanella loihica (strain ATCC BAA-1088 / PV-4)).